Reading from the N-terminus, the 244-residue chain is Phosphoadenosine 5'-phosphosulfate reductase (244 aa).

Cysteine 239 serves as the catalytic Nucleophile; cysteine thiosulfonate intermediate.

This sequence belongs to the PAPS reductase family. CysH subfamily.

It localises to the cytoplasm. The enzyme catalyses [thioredoxin]-disulfide + sulfite + adenosine 3',5'-bisphosphate + 2 H(+) = [thioredoxin]-dithiol + 3'-phosphoadenylyl sulfate. Its pathway is sulfur metabolism; hydrogen sulfide biosynthesis; sulfite from sulfate: step 3/3. Its function is as follows. Catalyzes the formation of sulfite from phosphoadenosine 5'-phosphosulfate (PAPS) using thioredoxin as an electron donor. This chain is Phosphoadenosine 5'-phosphosulfate reductase, found in Escherichia coli O81 (strain ED1a).